Here is a 273-residue protein sequence, read N- to C-terminus: Putative phosphoenolpyruvate synthase regulatory protein (273 aa).

153–160 (AVSRAGKT) provides a ligand contact to ADP.

Belongs to the pyruvate, phosphate/water dikinase regulatory protein family. PSRP subfamily.

It carries out the reaction [pyruvate, water dikinase] + ADP = [pyruvate, water dikinase]-phosphate + AMP + H(+). The enzyme catalyses [pyruvate, water dikinase]-phosphate + phosphate + H(+) = [pyruvate, water dikinase] + diphosphate. Functionally, bifunctional serine/threonine kinase and phosphorylase involved in the regulation of the phosphoenolpyruvate synthase (PEPS) by catalyzing its phosphorylation/dephosphorylation. This chain is Putative phosphoenolpyruvate synthase regulatory protein, found in Xanthomonas axonopodis pv. citri (strain 306).